We begin with the raw amino-acid sequence, 173 residues long: Terpene cyclase subB (173 aa).

The next 4 membrane-spanning stretches (helical) occupy residues 11–31 (PGYLEVAWIADTCKLLMGLGW), 51–71 (ALMPLCCNFAWELTYAVIYPF), 112–132 (LPFIFIICIAAWTTAHLALAL), and 141–161 (AFSAYGCQLLLSVGALCQLLS).

Belongs to the paxB family.

It localises to the membrane. Its pathway is secondary metabolite biosynthesis; terpenoid biosynthesis. Terpene cyclase; part of the gene cluster that mediates the biosynthesis of the immunosuppressants subglutinols, meroterpenoids consisting of an alpha-pyrone (4-hydroxy-5,6-dimethyl-2-pyrone) moiety attached to a decalin core fused to a five-membered cyclic ether carrying a prenylside chain. The first step of the pathway is the synthesis of the alpha-pyrone moiety by the polyketide synthase subA via condensation of one acetyl-CoA starter unit with 3 malonyl-CoA units and 2 methylations. The alpha-pyrone is then combined with geranylgeranyl pyrophosphate (GGPP) formed by the GGPP synthase subD through the action of the prenyltransferase subC to yield a linear alpha-pyrone diterpenoid. Subsequent steps in the subglutinol biosynthetic pathway involve the decalin core formation, which is thought to be initiated by the epoxidation of the C10-C11 olefin by the FAD-dependent oxidoreductase subE. The following cyclization cascade would be catalyzed by the terpene cyclase subB. Lastly, the FAD-dependent dehydrogenase subF probably catalyzes the five-membered cyclic ether formation to complete the formation of subglutinol A. Subsequent redox reactions appear to give rise to subglutinol C and D, however, it remains unclear which enzymes are responsible for these transformations. SubD may have secondary function in the conversion of the identified subglutinols to subglutinol analog 45, which seems to be the major product of the cluster. The sequence is that of Terpene cyclase subB from Metarhizium robertsii (strain ARSEF 23 / ATCC MYA-3075) (Metarhizium anisopliae (strain ARSEF 23)).